The following is a 479-amino-acid chain: MAQHTVYFPDAFLTQMREAMPSTLSFDDFLAACQRPLRRSIRVNTLKISVADFLQLTAPYGWTLTPIPWCEEGFWIERDNEDALPLGSTTEHLSGLFYIQEASSMLPVAALFADGNAPQRVMDVAAAPGSKTTQIAARMNNEGAILANEFSASWVKVLHANISRCGISNVALTHFGGRVFGAAVPEMFDAILLDAPCSGEGVVRKDPDALKNWSPESNQEIAATQRELIDSAFHALRPGGTLVYSTCTLNREENEAVCRWLKETYPDEVEFLPLGDLFPGANKALTEEGFLHVFPQIYDCEGFFVARLRKTQAIPALPAPKYKVGNFPFSPVKDREAGQIRQAAASVGLNWDGNLRLWQRDKELWLFPVGIEALIGKVRFSRLGIKLAETHNKGYRWQHEAVIAHASPDNVNAFELTPQEAEEWYRGRDVYPQAAPVADDVLVTFQHQPIGLAKRIGSRLKNSYPRELVRDGKLFTSNA.

Residues 125–131 (AAAPGSK), E149, G177, and D194 contribute to the S-adenosyl-L-methionine site. Residue C247 is the Nucleophile of the active site.

The protein belongs to the class I-like SAM-binding methyltransferase superfamily. RsmB/NOP family.

It localises to the cytoplasm. The catalysed reaction is cytidine(1407) in 16S rRNA + S-adenosyl-L-methionine = 5-methylcytidine(1407) in 16S rRNA + S-adenosyl-L-homocysteine + H(+). Specifically methylates the cytosine at position 1407 (m5C1407) of 16S rRNA. This chain is Ribosomal RNA small subunit methyltransferase F, found in Shigella flexneri serotype 5b (strain 8401).